Reading from the N-terminus, the 315-residue chain is Ribosomal protein L11 methyltransferase (315 aa).

Thr161, Gly182, Asp204, and Asn248 together coordinate S-adenosyl-L-methionine.

The protein belongs to the methyltransferase superfamily. PrmA family.

The protein resides in the cytoplasm. The catalysed reaction is L-lysyl-[protein] + 3 S-adenosyl-L-methionine = N(6),N(6),N(6)-trimethyl-L-lysyl-[protein] + 3 S-adenosyl-L-homocysteine + 3 H(+). Its function is as follows. Methylates ribosomal protein L11. This is Ribosomal protein L11 methyltransferase from Shouchella clausii (strain KSM-K16) (Alkalihalobacillus clausii).